Consider the following 489-residue polypeptide: Zinc finger protein 58 (489 aa).

A KRAB domain is found at 2 to 73 (LSFWDVAIDF…KRQAAAAVHP (72 aa)). The segment at 78-100 (NKCKDFSKAFFCKSLLTQHQRIR) adopts a C2H2-type 1; degenerate zinc-finger fold. 14 consecutive C2H2-type zinc fingers follow at residues 106-128 (FKCE…KRIH), 134-156 (YKCE…QRVH), 162-184 (YKCE…KRIH), 190-212 (YKCE…QKNH), 218-240 (YKCE…QRIH), 246-268 (YKCE…QIIH), 274-296 (YKCA…QRIH), 302-324 (CKCK…QRIH), 330-352 (YKCG…QRFH), 358-380 (YKCE…KLRH), 386-408 (YKCE…QKIH), 410-432 (YKCG…QRVH), 438-460 (HVCE…QLVH), and 466-488 (YKCE…QGIH).

It belongs to the krueppel C2H2-type zinc-finger protein family. As to expression, expressed in liver, testis and, at considerably lower levels, in brain, spleen and heart.

It localises to the nucleus. In terms of biological role, may have a role during differentiation processes. This chain is Zinc finger protein 58 (Zfp58), found in Mus musculus (Mouse).